A 231-amino-acid chain; its full sequence is NADH-ubiquinone oxidoreductase chain 4 (231 aa).

Transmembrane regions (helical) follow at residues 1–21 (PIAGSMVLAAILLKLGGYGII), 34–54 (MFLPFIVLALWGAILANLTCL), 63–85 (IAYSSISHMGLVVAAIIIQTPWG), 89–111 (AMALMIAHGFTSSALFCLANTTY), 128–148 (ILPMTTTWWLFVNLMNIAIPP), and 169–189 (TIIMLGLSMLITASYSLHMFL).

It belongs to the complex I subunit 4 family.

The protein localises to the mitochondrion membrane. It carries out the reaction a ubiquinone + NADH + 5 H(+)(in) = a ubiquinol + NAD(+) + 4 H(+)(out). Core subunit of the mitochondrial membrane respiratory chain NADH dehydrogenase (Complex I) that is believed to belong to the minimal assembly required for catalysis. Complex I functions in the transfer of electrons from NADH to the respiratory chain. The immediate electron acceptor for the enzyme is believed to be ubiquinone. This is NADH-ubiquinone oxidoreductase chain 4 (MT-ND4) from Deinagkistrodon acutus (Hundred-pace snake).